Consider the following 893-residue polypeptide: POU domain protein 2, isoform B (893 aa).

A disordered region spans residues 586-668 (QMKQQQREDP…STPKPTSGLT (83 aa)). Over residues 602-617 (PLAKSPLRSPSLSPVP) the composition is skewed to low complexity. Positions 623-646 (QQRTPPNSMTANSLGMSSAVMTPN) are enriched in polar residues. Residues 647-665 (TPSMQQQPQLQQSTPKPTS) show a composition bias toward low complexity. The 75-residue stretch at 681–755 (EETTDLEELE…LLQKWLEDAD (75 aa)) folds into the POU-specific domain. The segment at residues 786 to 845 (RRKKRTSIETTVRTTLEKAFLMNCKPTSEEISQLSERLNMDKEVIRVWFCNRRQKEKRIN) is a DNA-binding region (homeobox).

This sequence belongs to the POU transcription factor family. Class-2 subfamily. In terms of tissue distribution, initial expression in cellular blastoderm stage, then in ectodermal stripes during germband extension. Broad expression in the neuroectoderm followed by limitation to discrete subsets of CNS cells, and expression in specific PNS neurons and support cells.

It is found in the nucleus. DNA-binding regulatory protein implicated in early development. Involved in neuronal cell fate decision. May act as an octamer-dependent activator of transcription. Could also play an early role in specific ectodermal cells, and a subsequent role in the embryonic nervous system. This chain is POU domain protein 2, isoform B, found in Drosophila melanogaster (Fruit fly).